A 533-amino-acid chain; its full sequence is WUSCHEL-related homeobox 7 (533 aa).

Disordered stretches follow at residues 1 to 74 (MASS…NPRP) and 125 to 212 (SKNK…STQA). The span at 28–41 (AGSPPSLLSGSSAG) shows a compositional bias: low complexity. The segment covering 59–68 (GEERVPDPKP) has biased composition (basic and acidic residues). Positions 65-129 (DPKPRWNPRP…NRKSRSKNKL (65 aa)) form a DNA-binding region, homeobox; WUS-type. A compositionally biased stretch (gly residues) spans 132 to 143 (GGTGRAGLGLGG). Residues 161-174 (FTPPPPILPAPQPV) show a composition bias toward pro residues. The span at 175–202 (QPQQQLVSPVAAPTSSSSSSSDRSSGSS) shows a compositional bias: low complexity.

This sequence belongs to the WUS homeobox family.

Its subcellular location is the nucleus. Transcription factor which may be involved in developmental processes. This chain is WUSCHEL-related homeobox 7 (WOX7), found in Oryza sativa subsp. japonica (Rice).